Consider the following 182-residue polypeptide: Translation initiation factor IF-3 (182 aa).

A disordered region spans residues 1–22 (MPLGDCNISTPDNKQNRKNQEI).

This sequence belongs to the IF-3 family. In terms of assembly, monomer.

It is found in the cytoplasm. In terms of biological role, IF-3 binds to the 30S ribosomal subunit and shifts the equilibrium between 70S ribosomes and their 50S and 30S subunits in favor of the free subunits, thus enhancing the availability of 30S subunits on which protein synthesis initiation begins. This Xanthomonas campestris pv. campestris (strain ATCC 33913 / DSM 3586 / NCPPB 528 / LMG 568 / P 25) protein is Translation initiation factor IF-3.